Reading from the N-terminus, the 547-residue chain is Chaperonin GroEL (547 aa).

ATP contacts are provided by residues 30–33 (TLGP), lysine 51, 87–91 (DGTTT), glycine 415, and aspartate 495.

Belongs to the chaperonin (HSP60) family. In terms of assembly, forms a cylinder of 14 subunits composed of two heptameric rings stacked back-to-back. Interacts with the co-chaperonin GroES.

The protein localises to the cytoplasm. It catalyses the reaction ATP + H2O + a folded polypeptide = ADP + phosphate + an unfolded polypeptide.. Its function is as follows. Together with its co-chaperonin GroES, plays an essential role in assisting protein folding. The GroEL-GroES system forms a nano-cage that allows encapsulation of the non-native substrate proteins and provides a physical environment optimized to promote and accelerate protein folding. In Shewanella halifaxensis (strain HAW-EB4), this protein is Chaperonin GroEL.